The following is a 166-amino-acid chain: Ubiquitin-conjugating enzyme E2 7 (166 aa).

At Ala-2 the chain carries N-acetylalanine. Residues 4-164 (QASLLLQKQL…VSRCVRKSQE (161 aa)) enclose the UBC core domain. Cys-89 acts as the Glycyl thioester intermediate in catalysis.

This sequence belongs to the ubiquitin-conjugating enzyme family.

It catalyses the reaction S-ubiquitinyl-[E1 ubiquitin-activating enzyme]-L-cysteine + [E2 ubiquitin-conjugating enzyme]-L-cysteine = [E1 ubiquitin-activating enzyme]-L-cysteine + S-ubiquitinyl-[E2 ubiquitin-conjugating enzyme]-L-cysteine.. It functions in the pathway protein modification; protein ubiquitination. Its function is as follows. Accepts the ubiquitin from the E1 complex and catalyzes its covalent attachment to other proteins. Involved in the formation of multiubiquitin chains. Signal the protein for selective degradation. In Arabidopsis thaliana (Mouse-ear cress), this protein is Ubiquitin-conjugating enzyme E2 7 (UBC7).